Reading from the N-terminus, the 174-residue chain is Adenine phosphoribosyltransferase (174 aa).

Belongs to the purine/pyrimidine phosphoribosyltransferase family. As to quaternary structure, homodimer.

Its subcellular location is the cytoplasm. It carries out the reaction AMP + diphosphate = 5-phospho-alpha-D-ribose 1-diphosphate + adenine. It functions in the pathway purine metabolism; AMP biosynthesis via salvage pathway; AMP from adenine: step 1/1. Catalyzes a salvage reaction resulting in the formation of AMP, that is energically less costly than de novo synthesis. The protein is Adenine phosphoribosyltransferase of Mycolicibacterium vanbaalenii (strain DSM 7251 / JCM 13017 / BCRC 16820 / KCTC 9966 / NRRL B-24157 / PYR-1) (Mycobacterium vanbaalenii).